Reading from the N-terminus, the 351-residue chain is Phosphate acyltransferase (351 aa).

It belongs to the PlsX family. As to quaternary structure, homodimer. Probably interacts with PlsY.

It is found in the cytoplasm. It catalyses the reaction a fatty acyl-[ACP] + phosphate = an acyl phosphate + holo-[ACP]. Its pathway is lipid metabolism; phospholipid metabolism. Its function is as follows. Catalyzes the reversible formation of acyl-phosphate (acyl-PO(4)) from acyl-[acyl-carrier-protein] (acyl-ACP). This enzyme utilizes acyl-ACP as fatty acyl donor, but not acyl-CoA. The polypeptide is Phosphate acyltransferase (Gloeothece citriformis (strain PCC 7424) (Cyanothece sp. (strain PCC 7424))).